The sequence spans 126 residues: Fluoride-specific ion channel FluC (126 aa).

Transmembrane regions (helical) follow at residues 2 to 22 (LTFAPLNFLAIGVGATLGAWL), 37 to 57 (WGTLTANLVGGYLIGVMVALI), 65 to 85 (AWIRLAAVTGFLGGLTTFSTF), and 101 to 121 (AAAYAGASLAGSLAMTGLATV). 2 residues coordinate Na(+): Gly77 and Thr80.

This sequence belongs to the fluoride channel Fluc/FEX (TC 1.A.43) family.

Its subcellular location is the cell inner membrane. It catalyses the reaction fluoride(in) = fluoride(out). Its activity is regulated as follows. Na(+) is not transported, but it plays an essential structural role and its presence is essential for fluoride channel function. Fluoride-specific ion channel. Important for reducing fluoride concentration in the cell, thus reducing its toxicity. The sequence is that of Fluoride-specific ion channel FluC from Bordetella parapertussis (strain 12822 / ATCC BAA-587 / NCTC 13253).